A 127-amino-acid polypeptide reads, in one-letter code: Large-conductance mechanosensitive channel (127 aa).

The next 3 helical transmembrane spans lie at 9–29, 32–52, and 75–95; these read EFAM…GVAF, IVTA…LGGV, and VIDF…INLL.

This sequence belongs to the MscL family. In terms of assembly, homopentamer.

It is found in the cell inner membrane. Its function is as follows. Channel that opens in response to stretch forces in the membrane lipid bilayer. May participate in the regulation of osmotic pressure changes within the cell. The polypeptide is Large-conductance mechanosensitive channel (Legionella pneumophila (strain Corby)).